A 209-amino-acid chain; its full sequence is MKTSEWIDISQPLNNDIATWPGDTPFSYEVSWSKEESGSVNVGKLTMSIHTGTHIDAPFHFDNEGKKVIDLDVQVYVGPARIIDVSNLESIGKKELENFHLEGVERLLLRTSSHGKANEFPDVIPHLRADIAPFLSEKGIRLIGVDVPSVDPLDDKELAAHHQLFKHGIHILENVVLDHVADGDYELIALPLALSDADGSPVRAVIRPI.

Residue Trp20 participates in substrate binding. Zn(2+) contacts are provided by His50, His54, and Asp56. The Proton donor/acceptor role is filled by His60. Positions 161 and 173 each coordinate Zn(2+).

Belongs to the Cyclase 1 superfamily. KynB family. In terms of assembly, homodimer. Requires Zn(2+) as cofactor.

It catalyses the reaction N-formyl-L-kynurenine + H2O = L-kynurenine + formate + H(+). Its pathway is amino-acid degradation; L-tryptophan degradation via kynurenine pathway; L-kynurenine from L-tryptophan: step 2/2. Its function is as follows. Catalyzes the hydrolysis of N-formyl-L-kynurenine to L-kynurenine, the second step in the kynurenine pathway of tryptophan degradation. This Bacillus cereus (strain ZK / E33L) protein is Kynurenine formamidase.